We begin with the raw amino-acid sequence, 188 residues long: Elongation factor P (188 aa).

Belongs to the elongation factor P family.

The protein localises to the cytoplasm. The protein operates within protein biosynthesis; polypeptide chain elongation. Involved in peptide bond synthesis. Stimulates efficient translation and peptide-bond synthesis on native or reconstituted 70S ribosomes in vitro. Probably functions indirectly by altering the affinity of the ribosome for aminoacyl-tRNA, thus increasing their reactivity as acceptors for peptidyl transferase. The polypeptide is Elongation factor P (Christiangramia forsetii (strain DSM 17595 / CGMCC 1.15422 / KT0803) (Gramella forsetii)).